Consider the following 104-residue polypeptide: Ribonuclease P protein component 4 (104 aa).

Zn(2+)-binding residues include Cys57, Cys60, Cys83, and Cys86.

It belongs to the eukaryotic/archaeal RNase P protein component 4 family. As to quaternary structure, consists of a catalytic RNA component and at least 4-5 protein subunits. The cofactor is Zn(2+).

It is found in the cytoplasm. It catalyses the reaction Endonucleolytic cleavage of RNA, removing 5'-extranucleotides from tRNA precursor.. Part of ribonuclease P, a protein complex that generates mature tRNA molecules by cleaving their 5'-ends. In Saccharolobus islandicus (strain L.S.2.15 / Lassen #1) (Sulfolobus islandicus), this protein is Ribonuclease P protein component 4.